Reading from the N-terminus, the 123-residue chain is MDVFSEYLAGIADPFHRERTEEVLTWIKNKYPNLHTEIKWNQPMFTDHGTFIIGFSVSKKHLAVAPEKVTIAHVEDDIVKAGYDYTEQLIRIPWNGPVDYTLLEKMIEFNILDKADCSTFWRK.

In terms of assembly, homodimer, upon Fe(2+) binding. Interacts with the SufS/SufU complex. Interacts with CpfC. Fe(2+) is required as a cofactor.

It is found in the cytoplasm. Its function is as follows. Plays an essential role in iron intracellular trafficking to iron cofactor biogenesis systems including iron-sulfur cluster (Fe-S) or heme assembly. Promotes the biosynthesis of iron-sulfur clusters by delivering Fe to the complex composed of the cysteine desulfurase SufS and the zinc-dependent sulfurtransferase SufU. Also plays a critical role in coproporphyrin-dependent heme b biogenesis and thus provides an essential function for the bacterial global metabolism. The chain is Intracellular iron chaperone frataxin (fra) from Bacillus subtilis (strain 168).